Here is a 61-residue protein sequence, read N- to C-terminus: Metallothionein-1B (61 aa).

The tract at residues 1 to 29 is beta; the sequence is MDPNCSCVAGESCTCAGSCKCKQCRCASC. 20 residues coordinate a divalent metal cation: Cys5, Cys7, Cys13, Cys15, Cys19, Cys21, Cys24, Cys26, Cys29, Cys33, Cys34, Cys36, Cys37, Cys41, Cys44, Cys48, Cys50, Cys57, Cys59, and Cys60. An alpha region spans residues 30–61; sequence KKSCCSCCPVGCAKCAQGCVCKGASDKCSCCA.

The protein belongs to the metallothionein superfamily. Type 1 family.

Functionally, metallothioneins have a high content of cysteine residues that bind various heavy metals; these proteins are transcriptionally regulated by both heavy metals and glucocorticoids. The sequence is that of Metallothionein-1B from Equus caballus (Horse).